We begin with the raw amino-acid sequence, 443 residues long: 23S rRNA (uracil(1939)-C(5))-methyltransferase RlmD (443 aa).

The region spanning 10–68 is the TRAM domain; sequence RVTTKQTLTVTVNSLDPFGQGVAHHQGKAIFIPGALPGEQAEIELTEQKRQYSRGKLKR. 4 residues coordinate [4Fe-4S] cluster: cysteine 81, cysteine 87, cysteine 90, and cysteine 168. S-adenosyl-L-methionine is bound by residues glutamine 271, phenylalanine 300, asparagine 305, glutamate 321, asparagine 348, and aspartate 369. Cysteine 395 functions as the Nucleophile in the catalytic mechanism.

It belongs to the class I-like SAM-binding methyltransferase superfamily. RNA M5U methyltransferase family. RlmD subfamily.

The enzyme catalyses uridine(1939) in 23S rRNA + S-adenosyl-L-methionine = 5-methyluridine(1939) in 23S rRNA + S-adenosyl-L-homocysteine + H(+). Catalyzes the formation of 5-methyl-uridine at position 1939 (m5U1939) in 23S rRNA. This Yersinia enterocolitica serotype O:8 / biotype 1B (strain NCTC 13174 / 8081) protein is 23S rRNA (uracil(1939)-C(5))-methyltransferase RlmD.